Reading from the N-terminus, the 139-residue chain is Transcription antitermination protein NusB (139 aa).

This sequence belongs to the NusB family.

Functionally, involved in transcription antitermination. Required for transcription of ribosomal RNA (rRNA) genes. Binds specifically to the boxA antiterminator sequence of the ribosomal RNA (rrn) operons. This is Transcription antitermination protein NusB from Enterobacter sp. (strain 638).